A 438-amino-acid chain; its full sequence is Hydrogenobyrinate a,c-diamide synthase (438 aa).

The GATase cobBQ-type domain occupies 247-438 (RIALAEDAAF…TFFHAIAKGG (192 aa)). Residue Cys329 is the Nucleophile of the active site.

This sequence belongs to the CobB/CbiA family. The cofactor is Mg(2+).

It carries out the reaction hydrogenobyrinate + 2 L-glutamine + 2 ATP + 2 H2O = hydrogenobyrinate a,c-diamide + 2 L-glutamate + 2 ADP + 2 phosphate + 2 H(+). It functions in the pathway cofactor biosynthesis; adenosylcobalamin biosynthesis; cob(II)yrinate a,c-diamide from precorrin-2 (aerobic route): step 9/10. Functionally, catalyzes the ATP-dependent amidation of the two carboxylate groups at positions a and c of hydrogenobyrinate, using either L-glutamine or ammonia as the nitrogen source. The chain is Hydrogenobyrinate a,c-diamide synthase from Agrobacterium fabrum (strain C58 / ATCC 33970) (Agrobacterium tumefaciens (strain C58)).